Here is a 526-residue protein sequence, read N- to C-terminus: Na(+)/H(+) antiporter NhaB (526 aa).

11 helical membrane passes run 14 to 34 (FLGY…LVNP), 63 to 83 (CYPL…GMTS), 99 to 119 (MLLV…LFVF), 122 to 142 (LLLR…AAAF), 146 to 166 (FLDA…FYGI), 206 to 226 (LLMH…VGEP), 239 to 259 (FVSF…CGIL), 307 to 327 (AVIG…VGLI), 357 to 377 (FTAL…QQLF), 451 to 471 (ATPN…APLI), and 479 to 499 (VIMA…CVEF).

This sequence belongs to the NhaB Na(+)/H(+) (TC 2.A.34) antiporter family.

The protein localises to the cell inner membrane. The enzyme catalyses 2 Na(+)(in) + 3 H(+)(out) = 2 Na(+)(out) + 3 H(+)(in). Functionally, na(+)/H(+) antiporter that extrudes sodium in exchange for external protons. This Pectobacterium carotovorum subsp. carotovorum (strain PC1) protein is Na(+)/H(+) antiporter NhaB.